Here is a 151-residue protein sequence, read N- to C-terminus: SsrA-binding protein (151 aa).

The tract at residues 131-151 is disordered; that stretch reads KRESIKEKDWKRDQSRLIRQK.

Belongs to the SmpB family.

The protein localises to the cytoplasm. Required for rescue of stalled ribosomes mediated by trans-translation. Binds to transfer-messenger RNA (tmRNA), required for stable association of tmRNA with ribosomes. tmRNA and SmpB together mimic tRNA shape, replacing the anticodon stem-loop with SmpB. tmRNA is encoded by the ssrA gene; the 2 termini fold to resemble tRNA(Ala) and it encodes a 'tag peptide', a short internal open reading frame. During trans-translation Ala-aminoacylated tmRNA acts like a tRNA, entering the A-site of stalled ribosomes, displacing the stalled mRNA. The ribosome then switches to translate the ORF on the tmRNA; the nascent peptide is terminated with the 'tag peptide' encoded by the tmRNA and targeted for degradation. The ribosome is freed to recommence translation, which seems to be the essential function of trans-translation. The protein is SsrA-binding protein of Rickettsia bellii (strain OSU 85-389).